The following is a 576-amino-acid chain: RNA-binding post-transcriptional regulator cip2 (576 aa).

One can recognise an RRM domain in the interval 232-310; sequence TAIVIKNIPF…RRLRVEWKRQ (79 aa). Residues 355-420 enclose the R3H domain; the sequence is DPAILNVYSH…AKQVVITMPS (66 aa).

In terms of assembly, interacts with csx1. In terms of processing, phosphorylated by sty1.

It localises to the cytoplasm. Regulates global gene expression after oxidative stress. Interacts and stabilizes mRNAs and may regulate their transition between different cytoplasmic components after oxidative stress. The sequence is that of RNA-binding post-transcriptional regulator cip2 (cip2) from Schizosaccharomyces pombe (strain 972 / ATCC 24843) (Fission yeast).